Here is a 292-residue protein sequence, read N- to C-terminus: Probable starch degradation products transport system permease protein AmyD (292 aa).

The next 6 helical transmembrane spans lie at 15-35 (WLFI…PFII), 77-97 (FAVA…MLVT), 110-130 (FYLP…FIFV), 156-176 (FWGL…VIYI), 205-225 (VFPL…SNSF), and 260-280 (MAVG…ISVI). The 211-residue stretch at 71-281 (IIFTAKFAVA…LIIAVISVIQ (211 aa)) folds into the ABC transmembrane type-1 domain.

This sequence belongs to the binding-protein-dependent transport system permease family. MalFG subfamily.

The protein resides in the cell membrane. Its function is as follows. Probably part of a binding-protein-dependent transport system starch degradation products. Probably responsible for the translocation of the substrate across the membrane. This is Probable starch degradation products transport system permease protein AmyD (amyD) from Thermoanaerobacterium thermosulfurigenes (Clostridium thermosulfurogenes).